The primary structure comprises 277 residues: Large ribosomal subunit protein uL2 (277 aa).

Residues 199-277 form a disordered region; sequence DHMNTSIGKA…ILLSRHKRKK (79 aa). Residues 209–220 are compositionally biased toward basic residues; that stretch reads GRNRWLGRKPHN.

The protein belongs to the universal ribosomal protein uL2 family. As to quaternary structure, part of the 50S ribosomal subunit. Forms a bridge to the 30S subunit in the 70S ribosome.

Functionally, one of the primary rRNA binding proteins. Required for association of the 30S and 50S subunits to form the 70S ribosome, for tRNA binding and peptide bond formation. It has been suggested to have peptidyltransferase activity; this is somewhat controversial. Makes several contacts with the 16S rRNA in the 70S ribosome. This Bradyrhizobium diazoefficiens (strain JCM 10833 / BCRC 13528 / IAM 13628 / NBRC 14792 / USDA 110) protein is Large ribosomal subunit protein uL2.